The chain runs to 1311 residues: DENN domain-containing protein 5B (1311 aa).

The region spanning 53-270 (ATAAGENFDQ…EVPLPASGRS (218 aa)) is the uDENN domain. Polar residues predominate over residues 154 to 165 (QAEHNTSAQNCT). Residues 154–201 (QAEHNTSAQNCTSSSSSSSSSSSSSSMDSLSSSLDDVDSPSAHGGRRT) are disordered. Residues 166-187 (SSSSSSSSSSSSSSMDSLSSSL) are compositionally biased toward low complexity. Residues 289-452 (ELPLADFPLA…AVMSLQTSVL (164 aa)) form the cDENN domain. The dDENN domain occupies 454-619 (KELKSTSLRE…DNKIMSQWEE (166 aa)). The region spanning 809–969 (LEENTLIASL…DYFCFTSVFT (161 aa)) is the RUN 1 domain. Residues 854-874 (EQQLESPVSNGQERRKTESSV) form a disordered region. A helical membrane pass occupies residues 962–982 (FCFTSVFTTIMIPYRAVIIPI). Residues 973–1081 (IPYRAVIIPI…DDGSLERVLI (109 aa)) enclose the PLAT domain. The region spanning 1155-1306 (TVLLCGEGGL…FPITLETSLT (152 aa)) is the RUN 2 domain.

This sequence belongs to the RAB6IP1 family.

Its subcellular location is the membrane. In terms of biological role, guanine nucleotide exchange factor (GEF) which may activate the small GTPases Rab. May promote the exchange of GDP to GTP, converting inactive GDP-bound Rab proteins into their active GTP-bound form. The polypeptide is DENN domain-containing protein 5B (dennd5b) (Danio rerio (Zebrafish)).